The following is a 335-amino-acid chain: Fructose-1,6-bisphosphatase class 1 (335 aa).

The Mg(2+) site is built by Glu90, Asp113, Leu115, and Asp116. Substrate contacts are provided by residues Asp116–Ser119, Asn209, Tyr242, and Lys272. Position 278 (Glu278) interacts with Mg(2+).

Belongs to the FBPase class 1 family. Homotetramer. Requires Mg(2+) as cofactor.

The protein resides in the cytoplasm. It carries out the reaction beta-D-fructose 1,6-bisphosphate + H2O = beta-D-fructose 6-phosphate + phosphate. It functions in the pathway carbohydrate biosynthesis; gluconeogenesis. The polypeptide is Fructose-1,6-bisphosphatase class 1 (Mannheimia succiniciproducens (strain KCTC 0769BP / MBEL55E)).